The sequence spans 343 residues: Thymidine kinase (343 aa).

27-34 lines the ATP pocket; the sequence is GAYGIGKS. The active-site Proton acceptor is glutamate 56. Residues tyrosine 74 and glutamine 98 each coordinate substrate. Position 188 (arginine 188) interacts with ATP. Arginine 194 is a binding site for substrate.

The protein belongs to the herpesviridae thymidine kinase family. Homodimer.

It catalyses the reaction thymidine + ATP = dTMP + ADP + H(+). Its function is as follows. Catalyzes the transfer of the gamma-phospho group of ATP to thymidine to generate dTMP in the salvage pathway of pyrimidine synthesis. The dTMP serves as a substrate for DNA polymerase during viral DNA replication. Allows the virus to be reactivated and to grow in non-proliferative cells lacking a high concentration of phosphorylated nucleic acid precursors. This is Thymidine kinase from Felidae (cat family).